A 34-amino-acid polypeptide reads, in one-letter code: Photosystem II reaction center protein T (34 aa).

The chain crosses the membrane as a helical span at residues 3–23 (ALVYTFLLVSTLGIIFFAIFF).

It belongs to the PsbT family. In terms of assembly, PSII is composed of 1 copy each of membrane proteins PsbA, PsbB, PsbC, PsbD, PsbE, PsbF, PsbH, PsbI, PsbJ, PsbK, PsbL, PsbM, PsbT, PsbY, PsbZ, Psb30/Ycf12, at least 3 peripheral proteins of the oxygen-evolving complex and a large number of cofactors. It forms dimeric complexes.

It localises to the plastid. Its subcellular location is the chloroplast thylakoid membrane. Found at the monomer-monomer interface of the photosystem II (PS II) dimer, plays a role in assembly and dimerization of PSII. PSII is a light-driven water plastoquinone oxidoreductase, using light energy to abstract electrons from H(2)O, generating a proton gradient subsequently used for ATP formation. In Atropa belladonna (Belladonna), this protein is Photosystem II reaction center protein T.